A 72-amino-acid chain; its full sequence is Translational regulator CsrA (72 aa).

It belongs to the CsrA/RsmA family. In terms of assembly, homodimer; the beta-strands of each monomer intercalate to form a hydrophobic core, while the alpha-helices form wings that extend away from the core.

The protein resides in the cytoplasm. A translational regulator that binds mRNA to regulate translation initiation and/or mRNA stability. Usually binds in the 5'-UTR at or near the Shine-Dalgarno sequence preventing ribosome-binding, thus repressing translation. Its main target seems to be the major flagellin gene, while its function is anatagonized by FliW. The polypeptide is Translational regulator CsrA (Lachnoclostridium phytofermentans (strain ATCC 700394 / DSM 18823 / ISDg) (Clostridium phytofermentans)).